The following is a 498-amino-acid chain: ATP synthase subunit beta, chloroplastic (498 aa).

172–179 (GGAGVGKT) contacts ATP.

Belongs to the ATPase alpha/beta chains family. In terms of assembly, F-type ATPases have 2 components, CF(1) - the catalytic core - and CF(0) - the membrane proton channel. CF(1) has five subunits: alpha(3), beta(3), gamma(1), delta(1), epsilon(1). CF(0) has four main subunits: a(1), b(1), b'(1) and c(9-12).

It localises to the plastid. The protein resides in the chloroplast thylakoid membrane. It catalyses the reaction ATP + H2O + 4 H(+)(in) = ADP + phosphate + 5 H(+)(out). Its function is as follows. Produces ATP from ADP in the presence of a proton gradient across the membrane. The catalytic sites are hosted primarily by the beta subunits. The protein is ATP synthase subunit beta, chloroplastic of Hyphaene coriacea (Ilala palm).